Reading from the N-terminus, the 515-residue chain is MASGILVNVKEEVTCPICLELLTEPLSLPCGHSLCQACITANHKESMLYKEEERSCPVCRISYQPENIQPNRHVANIVEKLREVKLSPEEGQKVDHCARHGEKLLLFCQEDSKVICWLCERSQEHRGHHTFLMEEVAQEYHVKLQTALEMLRQKQQEAEKLEADIREEKASWKIQIDYDKTNVSADFEQLREILDWEESNELQNLEKEEEDILKSLTKSETEMVQQTQYMRELISDLEHRLQGSMMELLQGVDGIIKRVENMTLKKPKTFHKNQRRVFRAPDLKGMLDMFRELTDVRRYWVDVTLAPNNISHAVIAEDKRQVSYRNPQIMYQSPGSLFGSLTNFSYCTGVPGSQSITSGKLTNFNYCTGVLGSQSITSGKHYWEVDVSKKSAWILGVCAGFQPDATYNIEQNENYQPKYGYWVIGLQEGDKYSVFQDGSSHTPFAPFIVPLSVIICPDRVGVFVDYEACTVSFFNITNHGFLIYKFSQCSFSKPVFPYLNPRKCTVPMTLCSPSS.

Ala-2 carries the post-translational modification N-acetylalanine. The segment at 15 to 60 (CPICLELLTEPLSLPCGHSLCQACITANHKESMLYKEEERSCPVCR) adopts an RING-type zinc-finger fold. Ser-87 carries the phosphoserine modification. The B box-type zinc finger occupies 92–133 (QKVDHCARHGEKLLLFCQEDSKVICWLCERSQEHRGHHTFLM). Zn(2+)-binding residues include Cys-97, His-100, Cys-119, and His-125. Residues 137–225 (AQEYHVKLQT…LTKSETEMVQ (89 aa)) are a coiled coil. A required for interaction with GABARAP and for autophagy region spans residues 187 to 200 (FEQLREILDWEESN). In terms of domain architecture, B30.2/SPRY spans 283–515 (LKGMLDMFRE…VPMTLCSPSS (233 aa)).

This sequence belongs to the TRIM/RBCC family. In terms of assembly, can form homodimers and homotrimers. In addition to lower-order dimerization, also exhibits a higher-order multimerization and both low- and high-order multimerizations are essential for its restriction activity. Interacts with BTBD1 and BTBD2. Interacts with PSMC4, PSMC5, PSMD7 and HSPA8/HSC70. Interacts (via B30.2/SPRY domain) with HSPA1A/B. Interacts with PSMC2, MAP3K7/TAK1, TAB2 and TAB3. Interacts with SQSTM1. Interacts with TRIM6 and TRIM34. Interacts with ULK1 (phosphorylated form), GABARAP, GABARAPL1, GABARAPL2, MAP1LC3A, MAP1LC3C and BECN1. In terms of processing, degraded in a proteasome-independent fashion in the absence of viral infection but in a proteasome-dependent fashion following exposure to restriction sensitive virus. Autoubiquitinated in a RING finger- and UBE2D2-dependent manner. Monoubiquitinated by TRIM21. Deubiquitinated by Yersinia YopJ. Ubiquitination may not lead to proteasomal degradation.

Its subcellular location is the cytoplasm. It localises to the nucleus. It catalyses the reaction S-ubiquitinyl-[E2 ubiquitin-conjugating enzyme]-L-cysteine + [acceptor protein]-L-lysine = [E2 ubiquitin-conjugating enzyme]-L-cysteine + N(6)-ubiquitinyl-[acceptor protein]-L-lysine.. It participates in protein modification; protein ubiquitination. In terms of biological role, capsid-specific restriction factor that prevents infection from non-host-adapted retroviruses. Blocks viral replication early in the life cycle, after viral entry but before reverse transcription. In addition to acting as a capsid-specific restriction factor, also acts as a pattern recognition receptor that activates innate immune signaling in response to the retroviral capsid lattice. Binding to the viral capsid triggers its E3 ubiquitin ligase activity, and in concert with the heterodimeric ubiquitin conjugating enzyme complex UBE2V1-UBE2N (also known as UBC13-UEV1A complex) generates 'Lys-63'-linked polyubiquitin chains, which in turn are catalysts in the autophosphorylation of the MAP3K7/TAK1 complex (includes TAK1, TAB2, and TAB3). Activation of the MAP3K7/TAK1 complex by autophosphorylation results in the induction and expression of NF-kappa-B and MAPK-responsive inflammatory genes, thereby leading to an innate immune response in the infected cell. Restricts infection by human immunodeficiency virus type 1 (HIV-1) and N-tropic murine leukemia virus (N-MLV). Plays a role in regulating autophagy through activation of autophagy regulator BECN1 by causing its dissociation from its inhibitors BCL2 and TAB2. The sequence is that of Tripartite motif-containing protein 5 (TRIM5) from Chlorocebus pygerythrus (Vervet monkey).